We begin with the raw amino-acid sequence, 203 residues long: Glycerol-3-phosphate acyltransferase (203 aa).

The next 5 helical transmembrane spans lie at 5–25 (VLGLVLVAAGYLAGSIPFGVV), 55–75 (KLGIAVLLLDAAKAIVPILVA), 88–108 (FTVLVALAAFVGHLYPVWLGF), 114–134 (VATGLGIFLVLSPWAALAGAV), and 162–182 (FVAHGWTSPVSWAGLALAALI).

It belongs to the PlsY family. As to quaternary structure, probably interacts with PlsX.

The protein resides in the cell inner membrane. It carries out the reaction an acyl phosphate + sn-glycerol 3-phosphate = a 1-acyl-sn-glycero-3-phosphate + phosphate. It participates in lipid metabolism; phospholipid metabolism. Its function is as follows. Catalyzes the transfer of an acyl group from acyl-phosphate (acyl-PO(4)) to glycerol-3-phosphate (G3P) to form lysophosphatidic acid (LPA). This enzyme utilizes acyl-phosphate as fatty acyl donor, but not acyl-CoA or acyl-ACP. This is Glycerol-3-phosphate acyltransferase from Anaeromyxobacter sp. (strain Fw109-5).